A 106-amino-acid polypeptide reads, in one-letter code: MVNVPKTRKTYCKGKACRKHTQHKVTQYKAGKASLFAQGKRRYDRKQSGFGGQTKQIFRKKAKTTKKVVLRLECLSCKTKAQLPLKRCKHFELGGEKKQKGQALQF.

This sequence belongs to the eukaryotic ribosomal protein eL42 family.

This chain is Large ribosomal subunit protein eL42 (RPL44), found in Eremothecium gossypii (strain ATCC 10895 / CBS 109.51 / FGSC 9923 / NRRL Y-1056) (Yeast).